Here is a 274-residue protein sequence, read N- to C-terminus: Large ribosomal subunit protein uL2 (274 aa).

Disordered regions lie at residues 37–59 and 222–262; these read KAKN…GGHK and GAAM…RTNK. The segment covering 50-59 has biased composition (basic residues); it reads TTRHKGGGHK.

The protein belongs to the universal ribosomal protein uL2 family. As to quaternary structure, part of the 50S ribosomal subunit. Forms a bridge to the 30S subunit in the 70S ribosome.

One of the primary rRNA binding proteins. Required for association of the 30S and 50S subunits to form the 70S ribosome, for tRNA binding and peptide bond formation. It has been suggested to have peptidyltransferase activity; this is somewhat controversial. Makes several contacts with the 16S rRNA in the 70S ribosome. This Alcanivorax borkumensis (strain ATCC 700651 / DSM 11573 / NCIMB 13689 / SK2) protein is Large ribosomal subunit protein uL2.